We begin with the raw amino-acid sequence, 87 residues long: Exodeoxyribonuclease 7 small subunit (87 aa).

It belongs to the XseB family. Heterooligomer composed of large and small subunits.

The protein resides in the cytoplasm. The enzyme catalyses Exonucleolytic cleavage in either 5'- to 3'- or 3'- to 5'-direction to yield nucleoside 5'-phosphates.. Its function is as follows. Bidirectionally degrades single-stranded DNA into large acid-insoluble oligonucleotides, which are then degraded further into small acid-soluble oligonucleotides. In Xanthomonas campestris pv. campestris (strain 8004), this protein is Exodeoxyribonuclease 7 small subunit.